Here is a 204-residue protein sequence, read N- to C-terminus: Tumor protein D53 (204 aa).

The segment at 1-20 (MEAQAQGLLETEPLQGTDED) is disordered. Residues 22–73 (VASADFSSMLSEEEKEELKAELVQLEDEITTLRQVLSAKERHLVEIKQKLGM) are a coiled coil. Phosphoserine occurs at positions 29, 86, 122, and 131. An Omega-N-methylarginine modification is found at Arg133. At Thr146 the chain carries Phosphothreonine. Residues Ser149 and Ser174 each carry the phosphoserine modification.

Belongs to the TPD52 family. Forms a homodimer or heterodimer with other members of the family.

The sequence is that of Tumor protein D53 (TPD52L1) from Homo sapiens (Human).